Consider the following 381-residue polypeptide: Succinyl-diaminopimelate desuccinylase (381 aa).

Residue His-69 coordinates Zn(2+). Asp-71 is an active-site residue. Residue Asp-103 participates in Zn(2+) binding. The active-site Proton acceptor is Glu-137. Zn(2+) contacts are provided by Glu-138, Glu-166, and His-355.

This sequence belongs to the peptidase M20A family. DapE subfamily. In terms of assembly, homodimer. The cofactor is Zn(2+). Requires Co(2+) as cofactor.

The enzyme catalyses N-succinyl-(2S,6S)-2,6-diaminopimelate + H2O = (2S,6S)-2,6-diaminopimelate + succinate. It functions in the pathway amino-acid biosynthesis; L-lysine biosynthesis via DAP pathway; LL-2,6-diaminopimelate from (S)-tetrahydrodipicolinate (succinylase route): step 3/3. Its function is as follows. Catalyzes the hydrolysis of N-succinyl-L,L-diaminopimelic acid (SDAP), forming succinate and LL-2,6-diaminopimelate (DAP), an intermediate involved in the bacterial biosynthesis of lysine and meso-diaminopimelic acid, an essential component of bacterial cell walls. The chain is Succinyl-diaminopimelate desuccinylase from Rickettsia akari (strain Hartford).